The chain runs to 492 residues: Probable endopolygalacturonase D (492 aa).

An N-terminal signal peptide occupies residues 1–16; it reads MKRSALILSFLPLVFG. Cys-151 and Cys-166 are oxidised to a cystine. PbH1 repeat units follow at residues 216–238, 258–280, 281–319, and 320–341; these read GTSVTITGVEGHVIDGNGAAYWD, MYNSRIENLYIQNWPVHCFEIES, TEHLTVSGLTLNNSAGDAANSKSDGDPAAHNSDGFDIKE, and SSYFTLENTWVHNQDDCVAVTS. Asn-292 carries N-linked (GlcNAc...) asparagine glycosylation. Residue Asp-334 is the Proton donor of the active site. Residues Cys-336 and Cys-352 are joined by a disulfide bond. His-356 is an active-site residue. PbH1 repeat units lie at residues 371–392, 400–422, and 434–478; these read VNGVTFSNSQVISSQNGCRIKT, VYNIRYENITLSDISDYGIDVQQ, and TNGV…SITG. N-linked (GlcNAc...) asparagine glycans are attached at residues Asn-407 and Asn-441. 2 cysteine pairs are disulfide-bonded: Cys-461-Cys-466 and Cys-484-Cys-491.

This sequence belongs to the glycosyl hydrolase 28 family.

It localises to the secreted. The catalysed reaction is (1,4-alpha-D-galacturonosyl)n+m + H2O = (1,4-alpha-D-galacturonosyl)n + (1,4-alpha-D-galacturonosyl)m.. Involved in maceration and soft-rotting of plant tissue. Hydrolyzes the 1,4-alpha glycosidic bonds of de-esterified pectate in the smooth region of the plant cell wall. This is Probable endopolygalacturonase D (pgaD) from Aspergillus flavus (strain ATCC 200026 / FGSC A1120 / IAM 13836 / NRRL 3357 / JCM 12722 / SRRC 167).